Reading from the N-terminus, the 901-residue chain is Probable inorganic carbon transporter subunit DabA (901 aa).

4 residues coordinate Zn(2+): cysteine 424, aspartate 426, histidine 606, and cysteine 621.

This sequence belongs to the inorganic carbon transporter (TC 9.A.2) DabA family. In terms of assembly, forms a complex with DabB. It depends on Zn(2+) as a cofactor.

Its subcellular location is the cell membrane. Its function is as follows. Part of an energy-coupled inorganic carbon pump. This chain is Probable inorganic carbon transporter subunit DabA, found in Staphylococcus aureus (strain MRSA252).